A 327-amino-acid chain; its full sequence is tRNA uridine(34) hydroxylase (327 aa).

One can recognise a Rhodanese domain in the interval 130 to 224 (LDEDTVVLDT…YGKDPEVRGE (95 aa)). Cysteine 184 acts as the Cysteine persulfide intermediate in catalysis.

This sequence belongs to the TrhO family.

It carries out the reaction uridine(34) in tRNA + AH2 + O2 = 5-hydroxyuridine(34) in tRNA + A + H2O. In terms of biological role, catalyzes oxygen-dependent 5-hydroxyuridine (ho5U) modification at position 34 in tRNAs. The protein is tRNA uridine(34) hydroxylase of Streptococcus suis (strain 98HAH33).